Here is a 455-residue protein sequence, read N- to C-terminus: Gamma-glutamyl phosphate reductase (455 aa).

It belongs to the gamma-glutamyl phosphate reductase family.

Its subcellular location is the cytoplasm. It carries out the reaction L-glutamate 5-semialdehyde + phosphate + NADP(+) = L-glutamyl 5-phosphate + NADPH + H(+). Its pathway is amino-acid biosynthesis; L-proline biosynthesis; L-glutamate 5-semialdehyde from L-glutamate: step 2/2. In terms of biological role, catalyzes the NADPH-dependent reduction of L-glutamate 5-phosphate into L-glutamate 5-semialdehyde and phosphate. The product spontaneously undergoes cyclization to form 1-pyrroline-5-carboxylate. The protein is Gamma-glutamyl phosphate reductase of Synechococcus sp. (strain JA-2-3B'a(2-13)) (Cyanobacteria bacterium Yellowstone B-Prime).